The primary structure comprises 235 residues: Motile sperm domain-containing protein 3 (235 aa).

2 disordered regions span residues 1–30 and 143–170; these read MRRG…PSGP and ELQG…PFPE. The region spanning 33–145 is the MSP domain; that stretch reads PVLVFPPDLV…RAPAYPLELQ (113 aa). Helical transmembrane passes span 180–200 and 213–233; these read SFLL…LPLQ and VSLG…MVFL.

It is found in the membrane. The sequence is that of Motile sperm domain-containing protein 3 (MOSPD3) from Bos taurus (Bovine).